The following is a 259-amino-acid chain: Heat-labile enterotoxin IIA, A chain (259 aa).

The signal sequence occupies residues 1-18 (MIKHVLLFFVFISFSVSA). 23 to 37 (RADSRTPDEIRRAGG) serves as a coordination point for NAD(+). E128 is an active-site residue. A disulfide bridge links C203 with C215.

Belongs to the enterotoxin A family. In terms of assembly, heterohexamer of one A chain and of five B chains.

Its function is as follows. The biological activity of the toxin is produced by the A chain, which activates intracellular adenyl cyclase. This Escherichia coli protein is Heat-labile enterotoxin IIA, A chain.